The primary structure comprises 401 residues: Phosphoglycerate kinase, cytosolic (401 aa).

Valine 24, aspartate 25, asparagine 27, arginine 41, serine 63, histidine 64, glycine 66, arginine 67, arginine 122, histidine 154, and arginine 155 together coordinate (2R)-3-phosphoglycerate. Position 200 (glycine 200) interacts with ADP. Glycine 200 is a binding site for CDP. Residues lysine 202 and lysine 206 each contribute to the AMP site. Lysine 206 provides a ligand contact to ATP. Glycine 224 contacts ADP. Residue glycine 224 participates in CDP binding. AMP-binding residues include glycine 225 and glycine 297. Residues glycine 225 and glycine 297 each contribute to the ATP site. 2 residues coordinate CDP: glycine 322 and phenylalanine 327. Phenylalanine 327 contributes to the ADP binding site. Residue glutamate 328 coordinates AMP. ATP is bound by residues glutamate 328, aspartate 359, and serine 360. Residue aspartate 359 coordinates Mg(2+).

Belongs to the phosphoglycerate kinase family. Monomer. Requires Mg(2+) as cofactor.

The protein localises to the cytoplasm. It carries out the reaction (2R)-3-phosphoglycerate + ATP = (2R)-3-phospho-glyceroyl phosphate + ADP. Its pathway is carbohydrate degradation; glycolysis; pyruvate from D-glyceraldehyde 3-phosphate: step 2/5. The chain is Phosphoglycerate kinase, cytosolic from Nicotiana tabacum (Common tobacco).